The chain runs to 442 residues: ATP-dependent RNA helicase SUB2-2 (442 aa).

Residues T58–Q86 carry the Q motif motif. The 176-residue stretch at I89–I264 folds into the Helicase ATP-binding domain. Residue A102 to T109 coordinates ATP. The short motif at D211 to D214 is the DECD box element. One can recognise a Helicase C-terminal domain in the interval K292–S437.

Belongs to the DEAD box helicase family. DECD subfamily.

It localises to the nucleus. The enzyme catalyses ATP + H2O = ADP + phosphate + H(+). Functionally, ATP-binding RNA helicase involved in transcription elongation and required for the export of mRNA out of the nucleus. SUB2 also plays a role in pre-mRNA splicing and spliceosome assembly. May be involved in rDNA and telomeric silencing, and maintenance of genome integrity. This is ATP-dependent RNA helicase SUB2-2 (SUB2-2) from Vanderwaltozyma polyspora (strain ATCC 22028 / DSM 70294 / BCRC 21397 / CBS 2163 / NBRC 10782 / NRRL Y-8283 / UCD 57-17) (Kluyveromyces polysporus).